Reading from the N-terminus, the 204-residue chain is Large ribosomal subunit protein eL15 (204 aa).

This sequence belongs to the eukaryotic ribosomal protein eL15 family. As to quaternary structure, component of the large ribosomal subunit.

The protein resides in the cytoplasm. In terms of biological role, component of the large ribosomal subunit. The ribosome is a large ribonucleoprotein complex responsible for the synthesis of proteins in the cell. The sequence is that of Large ribosomal subunit protein eL15 (rpl15) from Silurus asotus (Amur catfish).